The sequence spans 89 residues: Late cornified envelope protein 3A (89 aa).

Low complexity-rich tracts occupy residues 1–10 and 17–46; these read MSCQQNQQQC and PAKSPAQCLPPASSSCAPSSGGCGPSSERS. 2 disordered regions span residues 1–46 and 62–89; these read MSCQ…SERS and CQSSNSCDRGSGQQGGSSSCGHSSAGCC.

Belongs to the LCE family. Interacts with CYSRT1; the interaction is direct. As to expression, skin-specific. Expression was readily detected in adult trunk skin, adult arm skin, fetal skin, penal skin, vulva, esophagus and tongue. Not expressed in the cervix, rectum, lung, colon, or placenta.

In terms of biological role, a structural component of the cornified envelope of the stratum corneum involved in innate cutaneous host defense. Possesses defensin-like antimicrobial activity against a broad spectrum of Gram-positive and Gram-negative bacteria, both aerobic and anaerobic species. Upon inflammation, may regulate skin barrier repair by shaping cutaneous microbiota composition and immune response to bacterial antigens. This Homo sapiens (Human) protein is Late cornified envelope protein 3A.